Consider the following 24-residue polypeptide: Humanin-like 3 (24 aa).

The protein belongs to the humanin family. As to expression, highly expressed in testis. Also expressed in kidney, heart, skeletal muscles and brain.

The protein resides in the secreted. The protein localises to the cytoplasm. In terms of biological role, plays a role as a neuroprotective and antiapoptotic factor. The protein is Humanin-like 3 of Homo sapiens (Human).